The chain runs to 792 residues: Probable CoA-transferase Rv1866 (792 aa).

Catalysis depends on aspartate 558, which acts as the Nucleophile.

The protein belongs to the CoA-transferase III family.

Probable CoA-transferase. The polypeptide is Probable CoA-transferase Rv1866 (Mycobacterium tuberculosis (strain ATCC 25618 / H37Rv)).